The chain runs to 377 residues: Alanine racemase (377 aa).

The Proton acceptor; specific for D-alanine role is filled by Lys-37. Position 37 is an N6-(pyridoxal phosphate)lysine (Lys-37). Arg-135 contributes to the substrate binding site. Tyr-271 serves as the catalytic Proton acceptor; specific for L-alanine. Met-319 serves as a coordination point for substrate.

The protein belongs to the alanine racemase family. It depends on pyridoxal 5'-phosphate as a cofactor.

It carries out the reaction L-alanine = D-alanine. It functions in the pathway amino-acid biosynthesis; D-alanine biosynthesis; D-alanine from L-alanine: step 1/1. Functionally, catalyzes the interconversion of L-alanine and D-alanine. May also act on other amino acids. The sequence is that of Alanine racemase (alr) from Helicobacter pylori (strain HPAG1).